Reading from the N-terminus, the 517-residue chain is Probable bifunctional methylthioribulose-1-phosphate dehydratase/enolase-phosphatase E1 (517 aa).

Residues Met1 to Asp242 form a methylthioribulose-1-phosphate dehydratase region. Cys114 serves as a coordination point for substrate. Residues His132 and His134 each contribute to the Zn(2+) site. The active-site Proton donor/acceptor; for methylthioribulose-1-phosphate dehydratase activity is Glu157. A Zn(2+)-binding site is contributed by His207. Residues Val278–Ile517 are enolase-phosphatase E1. Mg(2+) contacts are provided by Asp281 and Glu283. Substrate is bound by residues Ser416–Ser417 and Lys450. A Mg(2+)-binding site is contributed by Asp476.

This sequence in the N-terminal section; belongs to the aldolase class II family. MtnB subfamily. The protein in the C-terminal section; belongs to the HAD-like hydrolase superfamily. MasA/MtnC family. Requires Zn(2+) as cofactor. The cofactor is Mg(2+).

The catalysed reaction is 5-(methylsulfanyl)-D-ribulose 1-phosphate = 5-methylsulfanyl-2,3-dioxopentyl phosphate + H2O. It carries out the reaction 5-methylsulfanyl-2,3-dioxopentyl phosphate + H2O = 1,2-dihydroxy-5-(methylsulfanyl)pent-1-en-3-one + phosphate. It participates in amino-acid biosynthesis; L-methionine biosynthesis via salvage pathway; L-methionine from S-methyl-5-thio-alpha-D-ribose 1-phosphate: step 2/6. The protein operates within amino-acid biosynthesis; L-methionine biosynthesis via salvage pathway; L-methionine from S-methyl-5-thio-alpha-D-ribose 1-phosphate: step 3/6. It functions in the pathway amino-acid biosynthesis; L-methionine biosynthesis via salvage pathway; L-methionine from S-methyl-5-thio-alpha-D-ribose 1-phosphate: step 4/6. In Zea mays (Maize), this protein is Probable bifunctional methylthioribulose-1-phosphate dehydratase/enolase-phosphatase E1.